The chain runs to 238 residues: Oxidoreductase dmxR7 (238 aa).

The protein belongs to the avfA family.

The protein operates within secondary metabolite biosynthesis. Oxidoreductase; part of the gene cluster that mediates the biosynthesis of the dimeric xanthones cryptosporioptides. The pathway begins with the synthesis of atrochrysone thioester by the polyketide synthase dmx-nrPKS. The atrochrysone carboxyl ACP thioesterase dmxR1 then breaks the thioester bond and releases the atrochrysone carboxylic acid from dmx-nrPKS. Atrochrysone carboxylic acid is decarboxylated by the decarboxylase dmxR15, and oxidized by the anthrone oxygenase dmxR16 to yield emodin. Emodin is then reduced to emodin hydroquinone by the oxidoreductase dmxR7. A-ring reduction by the short chain dehydrogenase dmxR18, dehydration by the scytalone dehydratase-like protein dmxR17 and probable spontaneous re-oxidation, results in overall deoxygenation to chrysophanol. Baeyer-Villiger oxidation by the Baeyer-Villiger monooxygenase (BVMO) dmxR6 then yields monodictylactone in equilibrium with monodictyphenone. In the case of the cryptosporioptides biosynthesis, monodictylactone is reduced at C-12 to an alcohol (by the short chain dehydrogenases dmxR12 or dmxR8) and hydroxylated at C-5 by dmxR9, yielding the electron-rich aromatic which could eliminate H(2)O to form the ortho-quinonemethide, followed by tautomerisation to paraquinone and complete the formal reduction to produce the 10-methylgroup. Conjugate addition of C-4a-OH to the resulting paraquinone by the monooxygenase dmxR10 then gives cyclohexadienone, which is then reduced at C-5 by the short chain dehydrogenase dmxR3 to give the dihydroxanthone. The 6,7-epoxide in the cryptosporioptides could be introduced by the cytochrome P450 monooxygenase dmxL3. The highly reducing PKS dmxL2 manufactures butyrate, which is further carboxylated by dmxL1 to form ethylmalonate. It is not yet clear whether the carboxylation occurs while the butyrate is attached to the ACP of dmxL2, but this unusual fungal metabolite could then be esterified to O-5 by the O-acetyltransferase dmxR13. Finally, dimerization performed by dmxR5 gives the observed dimers cryptosporioptides A, B and C as the final products of the pathway. The polypeptide is Oxidoreductase dmxR7 (Cryptosporiopsis sp. (strain 8999)).